A 95-amino-acid chain; its full sequence is Large ribosomal subunit protein bL27 (95 aa).

A propeptide spanning residues 1-10 (MLLTMNLQLF) is cleaved from the precursor. Residues 12–38 (HKKGGGSTSNGRDSESKRLGAKSADGQ) form a disordered region.

Belongs to the bacterial ribosomal protein bL27 family. The N-terminus is cleaved by ribosomal processing cysteine protease Prp.

The protein is Large ribosomal subunit protein bL27 of Enterococcus faecalis (strain ATCC 700802 / V583).